We begin with the raw amino-acid sequence, 232 residues long: 5'-methylthioadenosine/S-adenosylhomocysteine nucleosidase (232 aa).

Catalysis depends on Glu12, which acts as the Proton acceptor. Substrate-binding positions include Gly78, Ile152, and 173–174; that span reads ME. Asp197 functions as the Proton donor in the catalytic mechanism.

This sequence belongs to the PNP/UDP phosphorylase family. MtnN subfamily. Homodimer.

It catalyses the reaction S-adenosyl-L-homocysteine + H2O = S-(5-deoxy-D-ribos-5-yl)-L-homocysteine + adenine. The catalysed reaction is S-methyl-5'-thioadenosine + H2O = 5-(methylsulfanyl)-D-ribose + adenine. It carries out the reaction 5'-deoxyadenosine + H2O = 5-deoxy-D-ribose + adenine. The protein operates within amino-acid biosynthesis; L-methionine biosynthesis via salvage pathway; S-methyl-5-thio-alpha-D-ribose 1-phosphate from S-methyl-5'-thioadenosine (hydrolase route): step 1/2. Functionally, catalyzes the irreversible cleavage of the glycosidic bond in both 5'-methylthioadenosine (MTA) and S-adenosylhomocysteine (SAH/AdoHcy) to adenine and the corresponding thioribose, 5'-methylthioribose and S-ribosylhomocysteine, respectively. Also cleaves 5'-deoxyadenosine, a toxic by-product of radical S-adenosylmethionine (SAM) enzymes, into 5-deoxyribose and adenine. Thus, is required for in vivo function of the radical SAM enzymes biotin synthase and lipoic acid synthase, that are inhibited by 5'-deoxyadenosine accumulation. This Klebsiella pneumoniae subsp. pneumoniae (strain ATCC 700721 / MGH 78578) protein is 5'-methylthioadenosine/S-adenosylhomocysteine nucleosidase.